The chain runs to 163 residues: SsrA-binding protein (163 aa).

Basic and acidic residues predominate over residues 135-156 (GKKEHDKRDDTKEREWKIEKSR). A disordered region spans residues 135–163 (GKKEHDKRDDTKEREWKIEKSRTMKHAAR).

It belongs to the SmpB family.

It localises to the cytoplasm. Functionally, required for rescue of stalled ribosomes mediated by trans-translation. Binds to transfer-messenger RNA (tmRNA), required for stable association of tmRNA with ribosomes. tmRNA and SmpB together mimic tRNA shape, replacing the anticodon stem-loop with SmpB. tmRNA is encoded by the ssrA gene; the 2 termini fold to resemble tRNA(Ala) and it encodes a 'tag peptide', a short internal open reading frame. During trans-translation Ala-aminoacylated tmRNA acts like a tRNA, entering the A-site of stalled ribosomes, displacing the stalled mRNA. The ribosome then switches to translate the ORF on the tmRNA; the nascent peptide is terminated with the 'tag peptide' encoded by the tmRNA and targeted for degradation. The ribosome is freed to recommence translation, which seems to be the essential function of trans-translation. This is SsrA-binding protein from Shewanella loihica (strain ATCC BAA-1088 / PV-4).